Here is a 355-residue protein sequence, read N- to C-terminus: Blue-sensitive opsin P467 (355 aa).

At 1–36 (MNGTEGINFYVPLSNKTGLVRSPFEYPQYYLADPWK) the chain is on the extracellular side. N-linked (GlcNAc...) asparagine glycans are attached at residues asparagine 2 and asparagine 15. A helical membrane pass occupies residues 37 to 61 (FKVLSFYMFFLIAAGMPLNGLTLFV). Residues 62–73 (TFQHKKLRQPLN) are Cytoplasmic-facing. Residues 74-98 (YILVNLAAANLVTVCCGFTVTFYAS) form a helical membrane-spanning segment. Topologically, residues 99 to 113 (WYAYFVFGPIGCAIE) are extracellular. Cysteine 110 and cysteine 187 form a disulfide bridge. Residues 114-133 (GFFATIGGQVALWSLVVLAI) form a helical membrane-spanning segment. The Cytoplasmic portion of the chain corresponds to 134–152 (ERYIVICKPMGNFRFSATH). The helical transmembrane segment at 153 to 176 (AIMGIAFTWFMALACAGPPLFGWS) threads the bilayer. The Extracellular portion of the chain corresponds to 177–202 (RFIPEGMQCSCGPDYYTLNPDFHNES). Residue asparagine 200 is glycosylated (N-linked (GlcNAc...) asparagine). The helical transmembrane segment at 203-230 (YVIYMFIVHFTVPMVVIFFSYGRLVCKV) threads the bilayer. Residues 231-252 (REAAAQQQESATTQKAEKEVTR) lie on the Cytoplasmic side of the membrane. A helical membrane pass occupies residues 253–276 (MVILMVLGFLLAWTPYAATAIWIF). At 277 to 284 (TNRGAAFS) the chain is on the extracellular side. A helical transmembrane segment spans residues 285 to 309 (VTFMTIPAFFSKSSSIYNPIIYVLL). Residue lysine 296 is modified to N6-(retinylidene)lysine. Residues 310 to 355 (NKQFRNCMVTTICCGKNPFGDEDVSSSVSQSKTEVSSVSSSQVAPA) lie on the Cytoplasmic side of the membrane. The tract at residues 333 to 355 (VSSSVSQSKTEVSSVSSSQVAPA) is disordered. Residues 334 to 355 (SSSVSQSKTEVSSVSSSQVAPA) show a composition bias toward low complexity.

It belongs to the G-protein coupled receptor 1 family. Opsin subfamily. Post-translationally, phosphorylated on some or all of the serine and threonine residues present in the C-terminal region. In terms of tissue distribution, in this lizard the color pigments are found in the rod-shaped photoreceptor cells which have been derived from ancestral cone-like photoreceptors.

It localises to the membrane. In terms of biological role, visual pigments are the light-absorbing molecules that mediate vision. They consist of an apoprotein, opsin, covalently linked to cis-retinal. This is Blue-sensitive opsin P467 from Gekko gecko (Tokay gecko).